Here is a 157-residue protein sequence, read N- to C-terminus: MGIIDFLLALMQDMILSAIPAVGFAMVFNVPHRALPWCALLGALGHGSRMLMMSAGFNIEWSTFMASLLVGSIGIQWSRWYLAHPKVFTVAAVIPMFPGISAYTAMISAVKISHLGYSEPMMITLLTNFLKASSIVGALSIGLSVPGLWLYRKRPRV.

4 helical membrane-spanning segments follow: residues 8-28 (LALM…AMVF), 55-75 (AGFN…SIGI), 87-107 (VFTV…TAMI), and 129-149 (FLKA…PGLW).

Belongs to the ThrE exporter (TC 2.A.79) family. As to quaternary structure, the transporter is composed of YjjB and YjjP.

The protein resides in the cell inner membrane. Involved in succinate export with YjjP. Both proteins are required for export. In Salmonella agona (strain SL483), this protein is Probable succinate transporter subunit YjjB.